The chain runs to 366 residues: Inactive protein RESTRICTED TEV MOVEMENT 2 (366 aa).

In terms of domain architecture, sHSP spans 14 to 121; that stretch reads VQYEDFVPKS…LPETSRTEAA (108 aa). Residues 129-133 form an A-1 repeat; it reads LEEKR. The tract at residues 129-220 is 6 X 5 AA repeats A of L-E-E-[SKR]-[ERK]; sequence LEEKRLLEES…LEERRLEERK (92 aa). An A-2 repeat occupies 135–139; the sequence is LEESR. An A-3 repeat occupies 156 to 160; it reads LEEKE. The stretch at 163–176 is one B-1 repeat; it reads IRKLQEEAKAKEEA. The 3 X 14 AA repeats B of [IMA]-[RK]-K-L-Q-E-E-A-K-A-K-E-[EK]-[LA] stretch occupies residues 163–206; sequence IRKLQEEAKAKEEAEMRKLQEEAKANEEAAAKKLQEEIEAKEKL. A B-2 repeat occupies 178–191; that stretch reads MRKLQEEAKANEEA. Residues 193–205 form a B-3 repeat; the sequence is AKKLQEEIEAKEK. Residues 206-210 form an A-4 repeat; it reads LEERK. Residues 211 to 215 form an A-5 repeat; it reads LEERR. One copy of the A-6 repeat lies at 216-220; the sequence is LEERK. The helical transmembrane segment at 322–342 threads the bilayer; that stretch reads LMMNVGVAALVIFALGAYVSY. Positions 345–366 are disordered; it reads CSSSSSSSSSSPSSSSSSTKPE. Low complexity predominate over residues 346–366; sequence SSSSSSSSSSPSSSSSSTKPE.

This sequence belongs to the small heat shock protein (HSP20) family.

The protein localises to the cell membrane. Its function is as follows. Seems to not be involved in heat resistance. Unable to mediate restriction of long-distance movement of the pathogenic tobacco etch virus (TEV) without causing a hypersensitive response or inducing systemic acquired resistance. The sequence is that of Inactive protein RESTRICTED TEV MOVEMENT 2 (RTM2) from Arabidopsis thaliana (Mouse-ear cress).